Consider the following 451-residue polypeptide: NADP-specific glutamate dehydrogenase (451 aa).

K113 is a catalytic residue. The residue at position 252 (S252) is a Phosphoserine.

Belongs to the Glu/Leu/Phe/Val dehydrogenases family. As to quaternary structure, homohexamer.

The catalysed reaction is L-glutamate + NADP(+) + H2O = 2-oxoglutarate + NH4(+) + NADPH + H(+). In Schizosaccharomyces pombe (strain 972 / ATCC 24843) (Fission yeast), this protein is NADP-specific glutamate dehydrogenase (gdh1).